A 909-amino-acid polypeptide reads, in one-letter code: E3 ubiquitin-protein ligase HACE1 (909 aa).

The segment at 1 to 21 (MERAMEQLNRLTRSLRRARTV) is N-terminal helix important for homodimerization. 7 ANK repeats span residues 23 to 55 (LPEDNETAVYTLMPMVMADQHRSVSELLSNSKF), 64 to 93 (VKRSLLHIAANCGSVECLVLLLKKGANPNY), 97 to 126 (SGCTPLHLAARNGQKKCMSKLLEYSADVNI), 130 to 159 (EGLTAIHWLAVNGRTELLHDLVQHVTDVDV), 163 to 192 (MGQTALHVACQNGHKTTVQCLLDSGADINR), 196 to 226 (SGATPLYFACSHGQRDTAQILLLRGAKYLPD), and 228 to 253 (NGVTPLDLCVQGGYGQTCEVLIQYHP). The tract at residues 398-433 (QDQEAPSLSAFEPPGPGSYESLPPGPGDSKPEVLAG) is disordered. Positions 574-909 (NCAKLKQGIA…HCGSYGYTMA (336 aa)) constitute an HECT domain. The Glycyl thioester intermediate role is filled by C876.

As to quaternary structure, homodimer. The homodimer is autoinhibited and stabilized by its N-terminal helix. Interacts with RAB1 (RAB1A, RAB1B or RAB1C), RAB4 (RAB4A or RAB4B) and RAB11 (RAB11A or RAB11B); in a GTP-dependent manner. Interacts with the 26S proteasomal complex through the 20S core proteasomal subunit. Interacts with RARB. In terms of processing, autoubiquitinated.

It is found in the golgi apparatus. The protein localises to the golgi stack membrane. The protein resides in the cytoplasm. It localises to the endoplasmic reticulum. It carries out the reaction S-ubiquitinyl-[E2 ubiquitin-conjugating enzyme]-L-cysteine + [acceptor protein]-L-lysine = [E2 ubiquitin-conjugating enzyme]-L-cysteine + N(6)-ubiquitinyl-[acceptor protein]-L-lysine.. It participates in protein modification; protein ubiquitination. With respect to regulation, sterically autoinhibited in its dimeric state. E3 ubiquitin-protein ligase involved in Golgi membrane fusion and regulation of small GTPases. Acts as a regulator of Golgi membrane dynamics during the cell cycle: recruited to Golgi membrane by Rab proteins and regulates postmitotic Golgi membrane fusion. Acts by mediating ubiquitination during mitotic Golgi disassembly, ubiquitination serving as a signal for Golgi reassembly later, after cell division. Specifically binds GTP-bound RAC1, mediating ubiquitination and subsequent degradation of active RAC1, thereby playing a role in host defense against pathogens. May also act as a transcription regulator via its interaction with RARB. This Mus musculus (Mouse) protein is E3 ubiquitin-protein ligase HACE1 (Hace1).